Consider the following 278-residue polypeptide: Elongation factor Ts (278 aa).

Residues 80–83 are involved in Mg(2+) ion dislocation from EF-Tu; sequence TDFV.

The protein belongs to the EF-Ts family.

It is found in the cytoplasm. Its function is as follows. Associates with the EF-Tu.GDP complex and induces the exchange of GDP to GTP. It remains bound to the aminoacyl-tRNA.EF-Tu.GTP complex up to the GTP hydrolysis stage on the ribosome. This Micrococcus luteus (strain ATCC 4698 / DSM 20030 / JCM 1464 / CCM 169 / CCUG 5858 / IAM 1056 / NBRC 3333 / NCIMB 9278 / NCTC 2665 / VKM Ac-2230) (Micrococcus lysodeikticus) protein is Elongation factor Ts.